We begin with the raw amino-acid sequence, 330 residues long: MLLLINVILTLWVSCANGQVKPCDFPDIKHGGLFHENMRRPYFPVAVGKYYSYYCDEHFETPSGSYWDYIHCTQNGWSPAVPCLRKCYFPYLENGYNQNYGRKFVQGNSTEVACHPGYGLPKAQTTVTCTEKGWSPTPRCIRVRTCSKSDIEIENGFISESSSIYILNKEIQYKCKPGYATADGNSSGSITCLQNGWSAQPICINSSEKCGPPPPISNGDTTSFLLKVYVPQSRVEYQCQPYYELQGSNYVTCSNGEWSEPPRCIHPCIITEENMNKNNIKLKGRSDRKYYAKTGDTIEFMCKLGYNANTSILSFQAVCREGIVEYPRCE.

The N-terminal stretch at 1 to 18 (MLLLINVILTLWVSCANG) is a signal peptide. 5 consecutive Sushi domains span residues 22-84 (PCDF…VPCL), 85-142 (RKCY…RCIR), 144-205 (RTCS…ICIN), 208-266 (EKCG…RCIH), and 267-330 (PCII…PRCE). 6 disulfides stabilise this stretch: cysteine 23–cysteine 72, cysteine 55–cysteine 83, cysteine 87–cysteine 129, cysteine 114–cysteine 140, cysteine 146–cysteine 192, and cysteine 175–cysteine 203. The N-linked (GlcNAc...) asparagine glycan is linked to asparagine 108. N-linked (GlcNAc...) asparagine glycosylation is found at asparagine 185 and asparagine 205. Disulfide bonds link cysteine 210-cysteine 253, cysteine 239-cysteine 264, cysteine 268-cysteine 319, and cysteine 302-cysteine 329. Asparagine 309 carries an N-linked (GlcNAc...) asparagine glycan.

Expressed by the liver and secreted in plasma.

It localises to the secreted. Functionally, might be involved in complement regulation. The sequence is that of Complement factor H-related protein 3 (CFHR3) from Homo sapiens (Human).